A 551-amino-acid polypeptide reads, in one-letter code: Thermophilic beta-amylase (551 aa).

The signal sequence occupies residues 1–32 (MIGAFKRLGQKLFLTLLTASLIFASSIVTANA). Asp-73 contacts substrate. Glu-80 is a Ca(2+) binding site. The substrate site is built by His-113 and Asp-121. Glu-167 contacts Ca(2+). The active-site Proton donor is Glu-195. 3 residues coordinate substrate: Lys-310, His-315, and Thr-353. The Proton acceptor role is filled by Glu-392. Substrate-binding positions include 393-394 (NA) and Arg-423. Residues 448–551 (LTPNGTIPVT…TGSVTITWQN (104 aa)) form the CBM20 domain.

It belongs to the glycosyl hydrolase 14 family. In terms of assembly, monomer. Ca(2+) is required as a cofactor.

The catalysed reaction is Hydrolysis of (1-&gt;4)-alpha-D-glucosidic linkages in polysaccharides so as to remove successive maltose units from the non-reducing ends of the chains.. The polypeptide is Thermophilic beta-amylase (Thermoanaerobacterium thermosulfurigenes (Clostridium thermosulfurogenes)).